We begin with the raw amino-acid sequence, 955 residues long: Leucine--tRNA ligase (955 aa).

The 'HIGH' region motif lies at 51–61 (PYLNGVLHAGH). Positions 647–651 (KLSKS) match the 'KMSKS' region motif. ATP is bound at residue Lys650.

It belongs to the class-I aminoacyl-tRNA synthetase family.

It is found in the cytoplasm. The catalysed reaction is tRNA(Leu) + L-leucine + ATP = L-leucyl-tRNA(Leu) + AMP + diphosphate. The polypeptide is Leucine--tRNA ligase (Methanococcus maripaludis (strain C7 / ATCC BAA-1331)).